Reading from the N-terminus, the 179-residue chain is Large ribosomal subunit protein uL5 (179 aa).

The protein belongs to the universal ribosomal protein uL5 family. As to quaternary structure, part of the 50S ribosomal subunit; part of the 5S rRNA/L5/L18/L25 subcomplex. Contacts the 5S rRNA and the P site tRNA. Forms a bridge to the 30S subunit in the 70S ribosome.

Functionally, this is one of the proteins that bind and probably mediate the attachment of the 5S RNA into the large ribosomal subunit, where it forms part of the central protuberance. In the 70S ribosome it contacts protein S13 of the 30S subunit (bridge B1b), connecting the 2 subunits; this bridge is implicated in subunit movement. Contacts the P site tRNA; the 5S rRNA and some of its associated proteins might help stabilize positioning of ribosome-bound tRNAs. In Rickettsia rickettsii (strain Iowa), this protein is Large ribosomal subunit protein uL5.